Consider the following 130-residue polypeptide: Large ribosomal subunit protein bL12 (130 aa).

It belongs to the bacterial ribosomal protein bL12 family. Homodimer. Part of the ribosomal stalk of the 50S ribosomal subunit. Forms a multimeric L10(L12)X complex, where L10 forms an elongated spine to which 2 to 4 L12 dimers bind in a sequential fashion. Binds GTP-bound translation factors.

Functionally, forms part of the ribosomal stalk which helps the ribosome interact with GTP-bound translation factors. Is thus essential for accurate translation. In Synechococcus sp. (strain RCC307), this protein is Large ribosomal subunit protein bL12.